The sequence spans 401 residues: G2/mitotic-specific cyclin-B1 (401 aa).

It belongs to the cyclin family. Cyclin AB subfamily. Interacts with the CDK1 protein kinase to form a serine/threonine kinase holoenzyme complex also known as maturation promoting factor (MPF). The cyclin subunit imparts substrate specificity to the complex.

Functionally, essential for the control of the cell cycle at the G2/M (mitosis) transition. This is G2/mitotic-specific cyclin-B1 (ccnb1) from Oryzias luzonensis (Luzon ricefish).